The following is a 96-amino-acid chain: Frd operon uncharacterized protein C (96 aa).

Belongs to the HupF/HypC family.

This chain is Frd operon uncharacterized protein C, found in Proteus vulgaris.